Consider the following 206-residue polypeptide: Pyridoxine/pyridoxamine 5'-phosphate oxidase (206 aa).

Residues 53–58 (RMVLLK), 68–69 (YT), lysine 75, and glutamine 97 contribute to the FMN site. Lysine 58 is a substrate binding site. Substrate contacts are provided by tyrosine 115, arginine 119, and serine 123. FMN-binding positions include 132–133 (QS) and tryptophan 177. A substrate-binding site is contributed by 183–185 (RLH). Arginine 187 is a binding site for FMN.

The protein belongs to the pyridoxamine 5'-phosphate oxidase family. Homodimer. FMN serves as cofactor.

The catalysed reaction is pyridoxamine 5'-phosphate + O2 + H2O = pyridoxal 5'-phosphate + H2O2 + NH4(+). It catalyses the reaction pyridoxine 5'-phosphate + O2 = pyridoxal 5'-phosphate + H2O2. Its pathway is cofactor metabolism; pyridoxal 5'-phosphate salvage; pyridoxal 5'-phosphate from pyridoxamine 5'-phosphate: step 1/1. It participates in cofactor metabolism; pyridoxal 5'-phosphate salvage; pyridoxal 5'-phosphate from pyridoxine 5'-phosphate: step 1/1. In terms of biological role, catalyzes the oxidation of either pyridoxine 5'-phosphate (PNP) or pyridoxamine 5'-phosphate (PMP) into pyridoxal 5'-phosphate (PLP). In Sinorhizobium fredii (strain NBRC 101917 / NGR234), this protein is Pyridoxine/pyridoxamine 5'-phosphate oxidase.